An 868-amino-acid polypeptide reads, in one-letter code: Translation initiation factor IF-2 (868 aa).

Disordered stretches follow at residues 49-72 and 92-276; these read LSKQ…TSTL and KRSD…EHLK. Basic and acidic residues predominate over residues 92–240; the sequence is KRSDIEEQQR…KKAEAEEVHL (149 aa). Residues 368-537 enclose the tr-type G domain; it reads SRAPVVTIMG…VLQSELLDLQ (170 aa). Residues 377-384 are G1; it reads GHVDHGKT. 377–384 contributes to the GTP binding site; that stretch reads GHVDHGKT. Residues 402–406 form a G2 region; that stretch reads GITQH. A G3 region spans residues 423–426; the sequence is DTPG. GTP contacts are provided by residues 423 to 427 and 477 to 480; these read DTPGH and NKMD. Residues 477 to 480 form a G4 region; that stretch reads NKMD. Positions 513-515 are G5; it reads SAK.

It belongs to the TRAFAC class translation factor GTPase superfamily. Classic translation factor GTPase family. IF-2 subfamily.

The protein resides in the cytoplasm. One of the essential components for the initiation of protein synthesis. Protects formylmethionyl-tRNA from spontaneous hydrolysis and promotes its binding to the 30S ribosomal subunits. Also involved in the hydrolysis of GTP during the formation of the 70S ribosomal complex. This Alteromonas mediterranea (strain DSM 17117 / CIP 110805 / LMG 28347 / Deep ecotype) protein is Translation initiation factor IF-2.